A 662-amino-acid polypeptide reads, in one-letter code: MTVSHNHSTKISQQPISSVSAFKFFGKKLLSSSHGNKLKKKASLPPDFHSTSTNDSESSSPKLPNSLKTSRRANSFAHTTNSKRSLSSASTKILPPAGSSTSISRGNRHSSTSRNLSNSKFSSERLVYNPYGVSTPSTSLSSVSTSMKKDPDLGFYLHDGDSKIRMLPIPIVDPNEYLPDEMKEASIQLSDNFVFDDENKTIGWGGSCEVRKIRSKYRKKDVFALKKLNMIYNETPEKFYKRCSKEFIIAKQLSHHVHITNTFLLVKVPTTVYTTRGWGFVMELGLRDLFAMIQKSGWRSVALAEKFCIFKQVACGVKFCHDQGIAHRDLKPENVLLSPDGVCKLTDFGISDWYHTDPHDLSSPVKKCAGMIGSPPYAPPEVMFYDSKKHYDTELQQPYDPRALDCYGLGIILMTLVNNVIPFLESCSFDTGFRDYCDAYENFIRLHDRAFRNRGNYRPGPGMEYHLARNFKNGHASRVAWRLADPEAATRYTIDDLFEDPWFQGIETCVDANDKYVCKKPIIKTTTYENPRGFHIATDVAATTPTSNPFLKNRVPIRSMVDIAAHPSPTATVLASSPPPPPPATHVPAEALFTLRETPPPQLATLTLSEEPPATPAPSAPSAPSARVRGHSPHRVVHHHLNIVNSLVHSSSAASSQVPAST.

The interval 35–119 (GNKLKKKASL…SSTSRNLSNS (85 aa)) is disordered. Low complexity predominate over residues 50-60 (STSTNDSESSS). Composition is skewed to polar residues over residues 61 to 91 (PKLPNSLKTSRRANSFAHTTNSKRSLSSAST) and 98 to 119 (GSSTSISRGNRHSSTSRNLSNS). The 308-residue stretch at 196–503 (DDENKTIGWG…IDDLFEDPWF (308 aa)) folds into the Protein kinase domain. ATP contacts are provided by residues 202–210 (IGWGGSCEV) and lysine 226. Residue aspartate 329 is the Proton acceptor of the active site. Positions 605–631 (TLTLSEEPPATPAPSAPSAPSARVRGH) are disordered.

The protein belongs to the protein kinase superfamily. Ser/Thr protein kinase family.

The catalysed reaction is L-seryl-[protein] + ATP = O-phospho-L-seryl-[protein] + ADP + H(+). It catalyses the reaction L-threonyl-[protein] + ATP = O-phospho-L-threonyl-[protein] + ADP + H(+). Its function is as follows. Essential determinant for low-affinity spermidine transport. This Saccharomyces cerevisiae (strain ATCC 204508 / S288c) (Baker's yeast) protein is Serine/threonine-protein kinase PTK1/STK1 (PTK1).